Here is a 323-residue protein sequence, read N- to C-terminus: Ribose-phosphate pyrophosphokinase (323 aa).

ATP contacts are provided by residues D38–E40 and R96–Q97. The Mg(2+) site is built by H130 and D170. Residue K193 is part of the active site. Residues R195, D219, and D223–T227 contribute to the D-ribose 5-phosphate site.

This sequence belongs to the ribose-phosphate pyrophosphokinase family. Class I subfamily. As to quaternary structure, homohexamer. Requires Mg(2+) as cofactor.

Its subcellular location is the cytoplasm. It catalyses the reaction D-ribose 5-phosphate + ATP = 5-phospho-alpha-D-ribose 1-diphosphate + AMP + H(+). It functions in the pathway metabolic intermediate biosynthesis; 5-phospho-alpha-D-ribose 1-diphosphate biosynthesis; 5-phospho-alpha-D-ribose 1-diphosphate from D-ribose 5-phosphate (route I): step 1/1. In terms of biological role, involved in the biosynthesis of the central metabolite phospho-alpha-D-ribosyl-1-pyrophosphate (PRPP) via the transfer of pyrophosphoryl group from ATP to 1-hydroxyl of ribose-5-phosphate (Rib-5-P). The polypeptide is Ribose-phosphate pyrophosphokinase (Chlorobaculum tepidum (strain ATCC 49652 / DSM 12025 / NBRC 103806 / TLS) (Chlorobium tepidum)).